Here is a 506-residue protein sequence, read N- to C-terminus: Galactose/methyl galactoside import ATP-binding protein MglA (506 aa).

2 consecutive ABC transporter domains span residues 14 to 249 (LEMS…VGRS) and 264 to 506 (VILE…SLHL). An ATP-binding site is contributed by 46–53 (GENGAGKS).

It belongs to the ABC transporter superfamily. Galactose/methyl galactoside importer (TC 3.A.1.2.3) family. As to quaternary structure, the complex is composed of one ATP-binding protein (MglA), two transmembrane proteins (MglC) and a solute-binding protein (MglB).

The protein localises to the cell inner membrane. It carries out the reaction D-galactose(out) + ATP + H2O = D-galactose(in) + ADP + phosphate + H(+). It catalyses the reaction methyl beta-D-galactoside(out) + ATP + H2O = methyl beta-D-galactoside(in) + ADP + phosphate + H(+). In terms of biological role, part of the ABC transporter complex MglABC involved in galactose/methyl galactoside import. Responsible for energy coupling to the transport system. This Shigella flexneri serotype 5b (strain 8401) protein is Galactose/methyl galactoside import ATP-binding protein MglA.